Reading from the N-terminus, the 1186-residue chain is MEPDVSIETLSIIRIAVLPIGTIPPTLLRDYHSMLLRHHTIALSAISSFYTEHQKSPFTNQPWDSGSLRFKFVLGGSPPSPWEDFQSNRKMLAVIGLCHCPSSPDLDSVTEKFNVACKSYSSALVRRCFAFSPGDSQLEDGDKKGENLILFPPSDKQTQEFHLQTMMQDIAASLLMEFEKWVLQAESAGTILKTPLDSQASLNSEEVIKAKKRRLGRAQKTIGDYSLLAGSPVDANAHYSTALELARLTGDYFWYAGALEGSVCALLVDRMGQRDVALEDEVRYRYTNVILHYRKSFIQEIAQRVSPLSFELEATLKLARFLCRRELAKEVVELLTNAADGAKSLIDASDRLILYVEVARLFGALGYQRKAAFFCRQVAQLYLQQDNRLAAISAMQVLSMTTDAYRIQSRASMSKVSVNNETGRLPDAGKMHHHSIVSLFESHWSTLQMVVLREILLSAVRAGDPLAAWSAAARLLRWHYPLITPSGQNGLANSLANSADRLPSGTRCADPALPFVRLFSFPLHSSQVDIVKRNPAREDWWTGSAPSGPFIYTPFSKGDANESSKQELIWVVGEPVQVLVELANPCCFDLRIDSIYLSAHSSNFDAFPVSVDIPPNSAKVITLSGIPTAVGPVTIPGCTVHCFGVITEHVFRDVDNLLLGAAQGLVFSDPFRSCGSAKLRHVFVPNISVAPPLPLLVANVVGGDGAIILYEGEIREVCINFANAGTVPIVQAHVSLSGKNQDAVISIADEALQSALPLKPGAQVTLPVTLKAWHVGPTDSDNTMSSGRNAAGNTGRPKDGTSPSLLIHYAGPLSNNGDSQEKESIVPPGRRLVVPLQICVLQGLSFVKARLLSMEIPAHVSDNLRDEDIERESNADSLVKINPFRGSWGLRFLELELSNPTDVVFEISVFVQLENSAKEDDSSPVQDSPEYEYPKTRIDRDYSARVLIPLEHFKLPVLDGSFFTKDPPPGSPSSSRNPSFSEKNTKAEINTLIKNLISKIKVRWQSGRNSSGELDIKDAIQTALQTTVMDVLLPDPLTFGFRLVRNGLEKDPETKAESPFSKGSVLSHEVTPMEVLVRNNTSEAIKLNLSVTCRDVAGQNCTEGADATVLWAGALSGISMEVAPLQEARHCFSLFFLVPGEYTMVAAAVIEDANNVLRARAGTASPNEPIFCRGPPFHVCVAGGAL.

Disordered regions lie at residues Pro777–Ser824 and Thr964–Asn984. Over residues Asp779 to Gly792 the composition is skewed to polar residues. Ser971 carries the phosphoserine modification. Residues Pro972 to Ser981 are compositionally biased toward low complexity.

This sequence belongs to the TRS120 family. Part of the multisubunit TRAPP (transport protein particle) II complex composed of BET3, BET5, TRS20, TRS23, TRS31, TRS33, TRS65, TRS85, TRS120 and TRS130. In terms of tissue distribution, expressed in roots, leaves, stems and flowers.

The protein resides in the golgi apparatus. It is found in the trans-Golgi network. Its subcellular location is the early endosome. Its function is as follows. Specific subunit of the TRAPP II complex, a highly conserved vesicle tethering complex that is required for the proper transport of proteins in post-Golgi trafficking pathways to the growing cell plate in mitotic active cells. Required for the polarized and selective transport of PIN2 and probably PIN1 to the plasma membrane. Not required for ER-to-Golgi as well as biosynthetic and endocytic vacuolar transport. In Arabidopsis thaliana (Mouse-ear cress), this protein is Trafficking protein particle complex II-specific subunit 120 homolog.